The primary structure comprises 235 residues: Regulator of G-protein signaling 18 (235 aa).

Ser49 carries the post-translational modification Phosphoserine. Residues 86-202 (SFDKLLSHRD…LKSETYLHLI (117 aa)) form the RGS domain. 2 positions are modified to phosphoserine: Ser216 and Ser218.

As to expression, expressed in bone marrow, spleen, fetal liver and lung. At very low levels expressed in heart.

The protein localises to the cytoplasm. Inhibits signal transduction by increasing the GTPase activity of G protein alpha subunits thereby driving them into their inactive GDP-bound form. Binds to G(i) alpha-1, G(i) alpha-2, G(i) alpha-3 and G(q) alpha. This is Regulator of G-protein signaling 18 (Rgs18) from Mus musculus (Mouse).